A 198-amino-acid polypeptide reads, in one-letter code: V-type proton ATPase subunit E (198 aa).

The protein belongs to the V-ATPase E subunit family.

Produces ATP from ADP in the presence of a proton gradient across the membrane. This is V-type proton ATPase subunit E from Borrelia hermsii (strain HS1 / DAH).